Reading from the N-terminus, the 237-residue chain is Lectin alpha chain (237 aa).

2 residues coordinate Mn(2+): Glu8 and Asp10. Ca(2+) contacts are provided by Asp10, Tyr12, Asn14, and Asp19. Residue Tyr12 participates in a carbohydrate binding. 2 residues coordinate Mn(2+): Asp19 and His24. 99-100 (LY) contributes to the a carbohydrate binding site. Asp208 provides a ligand contact to Ca(2+). Residue Arg228 coordinates a carbohydrate.

It belongs to the leguminous lectin family. As to quaternary structure, equilibrium between homodimer and homotetramer. Oligomerization is pH-dependent with homotetramers forming at pH 6.5 and above. The beta and gamma chains are produced by partial proteolytic processing of the lectin alpha chain by an asparaginyl endopeptidase. Mixture of 60% alpha lectin and 40% of its beta and gamma proteolytic fragments. As to expression, seed.

It is found in the vacuole. The protein localises to the aleurone grain. Functionally, D-mannose/D-glucose-binding lectin. Has anti-inflammatory activity in rats. Induces histamine release in mast cells from hamster and rat. Induces lymphocyte proliferation and IFNG production. Shows toxicity against the aquatic snail B.glabrata at concentrations higher than 20 ug/ml. This chain is Lectin alpha chain, found in Dioclea virgata.